A 2195-amino-acid chain; its full sequence is COPII coat assembly protein SEC16 (2195 aa).

The segment covering 1 to 20 (MTPEAKKRKNQKKKLKQKQK) has biased composition (basic residues). Positions 1-112 (MTPEAKKRKN…ADSNDLPDNS (112 aa)) are disordered. Composition is skewed to basic and acidic residues over residues 21–32 (KAAEKAASHSEE) and 49–59 (SVNRTESDIAS). Residue Ser28 is modified to Phosphoserine. Polar residues predominate over residues 66–79 (VSSSTNISPANETQ). Position 73 is a phosphoserine (Ser73). Residues 86–102 (QELHHKLLNDSDQHDIT) are compositionally biased toward basic and acidic residues. Ser144 carries the phosphoserine modification. Disordered stretches follow at residues 201–233 (PSDGNLLSPELSSGDTPTHNVPLGTKDNEINDD), 247–381 (NVLP…FHGH), 436–555 (TQSS…KASR), 594–616 (GTPNQQVSVPNIVSPKPPVVKDN), and 643–708 (SKKG…QSPV). The segment covering 210–219 (ELSSGDTPTH) has biased composition (polar residues). The segment covering 257–276 (EDERLKLETHVSTEEKKQDI) has biased composition (basic and acidic residues). Residues 282 to 292 (AENLFTSSTEP) show a composition bias toward polar residues. A Phosphoserine modification is found at Ser313. Basic and acidic residues predominate over residues 314–329 (DQKVPWEEDVKKDFHN). Polar residues predominate over residues 330–341 (ENTNNTQESAPN). Composition is skewed to basic and acidic residues over residues 342–381 (TDDRDKGYEGNEALKKSESCTAADERSYSEETSEDIFHGH) and 450–479 (STDKNADVTSKSQEKHEDLFAASGNDEKLP). Residues Ser472 and Ser483 each carry the phosphoserine modification. Residues 489–501 (SGKTENSMQTSTE) show a composition bias toward polar residues. The segment covering 512–533 (ENDDDLLDDDDSFLASSEEEDT) has biased composition (acidic residues). 2 stretches are compositionally biased toward polar residues: residues 534–545 (VPNTDNTTNLTS) and 594–604 (GTPNQQVSVPN). Residue Thr595 is modified to Phosphothreonine. Phosphoserine occurs at positions 607, 660, 663, 665, 674, 678, 681, 701, 704, 706, 759, 762, 765, 768, 843, 1511, 1515, 1578, 1602, 1603, 1611, and 1617. Residues 657–666 (RFGSGNSFSS) are compositionally biased toward polar residues. Positions 693–708 (EPRSSRTNSAISQSPV) are enriched in polar residues. Disordered stretches follow at residues 1656-1731 (VHET…TVNP) and 1751-1804 (GTDA…QDEN). Positions 1673–1682 (MPEDESHTSH) are enriched in basic and acidic residues. Polar residues-rich tracts occupy residues 1683–1693 (DNSNADQNTLK) and 1775–1786 (ENISKSASSAYL). 2 positions are modified to phosphoserine: Ser1778 and Ser1875. Residues 1917 to 1936 (SFELSESTSQAQSNGNVASE) form a disordered region. Phosphoserine occurs at positions 1973, 1986, and 1992. Residues 1976-2031 (DKYNDVIEDESDDDNMSTDEAKNRKEEKKNVNMKKETKPSNKDIDDKSNGWFGWLK) form a disordered region. Residues 1981-1992 (VIEDESDDDNMS) show a composition bias toward acidic residues. The span at 1994–2023 (DEAKNRKEEKKNVNMKKETKPSNKDIDDKS) shows a compositional bias: basic and acidic residues. Thr2049 is subject to Phosphothreonine. Basic and acidic residues predominate over residues 2054–2072 (EKLKRWVNKDATEEEKQKI). Positions 2054–2195 (EKLKRWVNKD…GYVNVMDNIQ (142 aa)) are disordered. Ser2130 is modified (phosphoserine). Positions 2131–2143 (PTGPNPNNSPSPS) are enriched in pro residues.

This sequence belongs to the SEC16 family. Interacts with SEC23, SEC31 and SED4.

It localises to the endoplasmic reticulum membrane. Involved in the initiation of assembly of the COPII coat required for the formation of transport vesicles from the endoplasmic reticulum (ER) and the selection of cargo molecules. Also involved in autophagy. The protein is COPII coat assembly protein SEC16 (SEC16) of Saccharomyces cerevisiae (strain ATCC 204508 / S288c) (Baker's yeast).